We begin with the raw amino-acid sequence, 225 residues long: Non-structural protein V (225 aa).

Over residues 145–157 (SGPSLTDQASSKD) the composition is skewed to polar residues. A disordered region spans residues 145–172 (SGPSLTDQASSKDPNFKRGGEIDGRHKG). The segment covering 158–169 (PNFKRGGEIDGR) has biased composition (basic and acidic residues). Zn(2+) is bound by residues His174, Cys193, Cys197, Cys209, Cys211, Cys214, Cys218, and Cys221.

This sequence belongs to the paramyxoviruses V protein family.

It localises to the host cytoplasm. Its function is as follows. Plays an essential role in the inhibition of host immune response. Prevents the establishment of cellular antiviral state by blocking interferon-alpha/beta (IFN-alpha/beta) production and signaling pathway. Interacts with host IFIH1/MDA5 and DHX58/LGP2 to inhibit the transduction pathway involved in the activation of IFN-beta promoter, thus protecting the virus against cell antiviral state. Efficiently blocks type I and type II IFN signaling following infection, probably by targeting host STAT1 for proteasomal degradation. The protein is Non-structural protein V (P/V) of Simian virus 41 (SV41).